A 344-amino-acid polypeptide reads, in one-letter code: Ribosomal RNA large subunit methyltransferase Cfr (344 aa).

E90 (proton acceptor) is an active-site residue. In terms of domain architecture, Radical SAM core spans K97–E330. Cysteines 104 and 335 form a disulfide. Residues C111, C115, and C118 each contribute to the [4Fe-4S] cluster site. S-adenosyl-L-methionine is bound by residues G157–E158, S188, S211–H213, and N292. Residue C335 is the S-methylcysteine intermediate of the active site.

The protein belongs to the radical SAM superfamily. RlmN family. Cfr subfamily. [4Fe-4S] cluster is required as a cofactor.

Its subcellular location is the cytoplasm. The enzyme catalyses adenosine(2503) in 23S rRNA + 2 reduced [2Fe-2S]-[ferredoxin] + 2 S-adenosyl-L-methionine = 8-methyladenosine(2503) in 23S rRNA + 5'-deoxyadenosine + L-methionine + 2 oxidized [2Fe-2S]-[ferredoxin] + S-adenosyl-L-homocysteine. Functionally, specifically methylates position 8 of adenine 2503 in 23S rRNA. Confers resistance to some classes of antibiotics. This chain is Ribosomal RNA large subunit methyltransferase Cfr, found in Clostridium botulinum (strain Langeland / NCTC 10281 / Type F).